We begin with the raw amino-acid sequence, 239 residues long: Isopentenyl-diphosphate Delta-isomerase (239 aa).

Lysine 43 provides a ligand contact to substrate. Residues histidine 47 and histidine 58 each contribute to the Mg(2+) site. Residues 56-210 (LLHRAFSIFL…KVKVTPWFRL (155 aa)) enclose the Nudix hydrolase domain. Residues arginine 77 and lysine 81 each coordinate substrate. Cysteine 93 is a catalytic residue. A substrate-binding site is contributed by serine 94. 2 residues coordinate Mg(2+): glutamate 156 and glutamate 158. Residue glutamate 158 is part of the active site.

Belongs to the IPP isomerase type 1 family. Mg(2+) serves as cofactor.

It carries out the reaction isopentenyl diphosphate = dimethylallyl diphosphate. The protein operates within isoprenoid biosynthesis; dimethylallyl diphosphate biosynthesis; dimethylallyl diphosphate from isopentenyl diphosphate: step 1/1. In terms of biological role, catalyzes the 1,3-allylic rearrangement of the homoallylic substrate isopentenyl (IPP) to its highly electrophilic allylic isomer, dimethylallyl diphosphate (DMAPP). The protein is Isopentenyl-diphosphate Delta-isomerase (ipi) of Dictyostelium discoideum (Social amoeba).